We begin with the raw amino-acid sequence, 448 residues long: SVP1-like protein 2 (448 aa).

Asn-61, Asn-155, Asn-256, Asn-280, Asn-315, and Asn-421 each carry an N-linked (GlcNAc...) asparagine glycan. 2 WD repeats span residues 222–262 (AHKN…LIKE) and 267–306 (VDKA…NTET). Residues 416–435 (THYSLNESLRNEDTKSAGEP) are disordered. The segment covering 424-435 (LRNEDTKSAGEP) has biased composition (basic and acidic residues).

Belongs to the WD repeat PROPPIN family. Post-translationally, N-glycosylated.

The protein resides in the endosome membrane. Its subcellular location is the prevacuolar compartment membrane. Involved in piecemeal microautophagy of the nucleus (micronucleophagy). This chain is SVP1-like protein 2 (HSV2), found in Saccharomyces cerevisiae (strain ATCC 204508 / S288c) (Baker's yeast).